The following is a 330-amino-acid chain: Peroxisomal membrane protein PEX13 (330 aa).

Positions 1–14 (MSAPPTNQPPPLPP) are enriched in pro residues. The interval 1–20 (MSAPPTNQPPPLPPRSFDNQ) is disordered. Residues 193-213 (ASVNWPAALFWVVAIGGPWLI) traverse the membrane as a helical segment. The SH3 domain occupies 235–300 (APHYTAQALF…PINYVRIVGK (66 aa)).

It belongs to the peroxin-13 family. As to quaternary structure, interacts with PEX14/prx-14; forming the PEX13-PEX14 docking complex.

The protein localises to the peroxisome membrane. Functionally, component of the PEX13-PEX14 docking complex, a translocon channel that specifically mediates the import of peroxisomal cargo proteins bound to PEX5/prx-5 receptor. The PEX13-PEX14 docking complex forms a large import pore which can be opened to a diameter of about 9 nm. Mechanistically, PEX5/prx-5 receptor along with cargo proteins associates with the PEX14/prx-14 subunit of the PEX13-PEX14 docking complex in the cytosol, leading to the insertion of the receptor into the organelle membrane with the concomitant translocation of the cargo into the peroxisome matrix. The polypeptide is Peroxisomal membrane protein PEX13 (prx-13) (Caenorhabditis elegans).